The primary structure comprises 494 residues: Lysine--tRNA ligase (494 aa).

Mg(2+)-binding residues include Glu405 and Glu412.

Belongs to the class-II aminoacyl-tRNA synthetase family. In terms of assembly, homodimer. It depends on Mg(2+) as a cofactor.

The protein resides in the cytoplasm. The catalysed reaction is tRNA(Lys) + L-lysine + ATP = L-lysyl-tRNA(Lys) + AMP + diphosphate. The protein is Lysine--tRNA ligase (lysS) of Geobacillus stearothermophilus (Bacillus stearothermophilus).